Consider the following 244-residue polypeptide: Thiol S-methyltransferase TMT1B (244 aa).

The N-terminal stretch at Met1–Ala23 is a signal peptide.

Belongs to the methyltransferase superfamily.

The protein localises to the endoplasmic reticulum membrane. The protein resides in the lipid droplet. Its subcellular location is the microsome. It is found in the cytoplasm. It localises to the cytosol. It catalyses the reaction a thiol + S-adenosyl-L-methionine = a methyl thioether + S-adenosyl-L-homocysteine + H(+). In terms of biological role, thiol S-methyltransferase that catalyzes the transfer of a methyl group from S-adenosyl-L-methionine to alkyl and phenolic thiol-containing acceptor substrates. Together with TMT1B accounts for most of S-thiol methylation activity in the endoplasmic reticulum of hepatocytes. Selectively methylates S-centered nucleophiles from metabolites such as hydrogen sulfide and dithiothreitol. The chain is Thiol S-methyltransferase TMT1B from Mus musculus (Mouse).